Consider the following 593-residue polypeptide: Zinc metalloproteinase-disintegrin-like kaouthiagin-like (593 aa).

Residues 1–20 form the signal peptide; that stretch reads MIQALLVIICLAVFPHQGSS. A propeptide spanning residues 21–196 is cleaved from the precursor; the sequence is IILESGNVND…KTSQFTNTPE (176 aa). Residues 205–400 enclose the Peptidase M12B domain; that stretch reads KYIEFYVIVD…DRPQCILNKP (196 aa). Residues Glu208 and Asp292 each coordinate Ca(2+). Cystine bridges form between Cys316–Cys395, Cys356–Cys379, and Cys358–Cys363. The N-linked (GlcNAc...) asparagine glycan is linked to Asn319. The Zn(2+) site is built by His341, His345, and His351. Ca(2+) is bound by residues Cys395, Asn398, Ile410, Asn413, Phe415, Glu417, Glu420, and Asp423. Residues 408-477 enclose the Disintegrin domain; sequence PPICGNYFVE…ECPTDSLQRN (70 aa). 12 disulfide bridges follow: Cys411/Cys440, Cys422/Cys435, Cys424/Cys430, Cys434/Cys462, Cys449/Cys469, Cys456/Cys488, Cys481/Cys493, Cys500/Cys550, Cys515/Cys558, Cys528/Cys538, Cys545/Cys581, and Cys575/Cys586. Residues 455-457 carry the D/ECD-tripeptide motif; that stretch reads DCD. Ca(2+) contacts are provided by Asp457, Leu458, Glu460, Asp472, and Ser473. N-linked (GlcNAc...) asparagine glycosylation occurs at Asn490.

Belongs to the venom metalloproteinase (M12B) family. P-III subfamily. P-IIIa sub-subfamily. In terms of assembly, monomer. Zn(2+) is required as a cofactor. As to expression, expressed by the venom gland.

It is found in the secreted. In terms of biological role, snake venom zinc metalloproteinase that cleaves the membrane-bound precursor of TNF-alpha (TNF) into its mature soluble form showing the same digestion pattern than ADAM17. The chain is Zinc metalloproteinase-disintegrin-like kaouthiagin-like from Naja atra (Chinese cobra).